We begin with the raw amino-acid sequence, 108 residues long: Small ribosomal subunit protein uS10 (108 aa).

It belongs to the universal ribosomal protein uS10 family. As to quaternary structure, part of the 30S ribosomal subunit.

Its function is as follows. Involved in the binding of tRNA to the ribosomes. This is Small ribosomal subunit protein uS10 from Ehrlichia chaffeensis (strain ATCC CRL-10679 / Arkansas).